The primary structure comprises 374 residues: Queuine tRNA-ribosyltransferase (374 aa).

Aspartate 90 (proton acceptor) is an active-site residue. Substrate is bound by residues 90–94, aspartate 144, glutamine 193, and glycine 220; that span reads DSGGF. The RNA binding stretch occupies residues 251–257; it reads GVGTPED. Aspartate 270 functions as the Nucleophile in the catalytic mechanism. Residues 275 to 279 form an RNA binding; important for wobble base 34 recognition region; that stretch reads TRNAR. Residues cysteine 308, cysteine 310, cysteine 313, and histidine 339 each coordinate Zn(2+).

This sequence belongs to the queuine tRNA-ribosyltransferase family. As to quaternary structure, homodimer. Within each dimer, one monomer is responsible for RNA recognition and catalysis, while the other monomer binds to the replacement base PreQ1. It depends on Zn(2+) as a cofactor.

The catalysed reaction is 7-aminomethyl-7-carbaguanine + guanosine(34) in tRNA = 7-aminomethyl-7-carbaguanosine(34) in tRNA + guanine. Its pathway is tRNA modification; tRNA-queuosine biosynthesis. Functionally, catalyzes the base-exchange of a guanine (G) residue with the queuine precursor 7-aminomethyl-7-deazaguanine (PreQ1) at position 34 (anticodon wobble position) in tRNAs with GU(N) anticodons (tRNA-Asp, -Asn, -His and -Tyr). Catalysis occurs through a double-displacement mechanism. The nucleophile active site attacks the C1' of nucleotide 34 to detach the guanine base from the RNA, forming a covalent enzyme-RNA intermediate. The proton acceptor active site deprotonates the incoming PreQ1, allowing a nucleophilic attack on the C1' of the ribose to form the product. After dissociation, two additional enzymatic reactions on the tRNA convert PreQ1 to queuine (Q), resulting in the hypermodified nucleoside queuosine (7-(((4,5-cis-dihydroxy-2-cyclopenten-1-yl)amino)methyl)-7-deazaguanosine). The chain is Queuine tRNA-ribosyltransferase from Campylobacter fetus subsp. fetus (strain 82-40).